The chain runs to 115 residues: Large ribosomal subunit protein bL20 (115 aa).

It belongs to the bacterial ribosomal protein bL20 family.

Binds directly to 23S ribosomal RNA and is necessary for the in vitro assembly process of the 50S ribosomal subunit. It is not involved in the protein synthesizing functions of that subunit. This Borrelia turicatae (strain 91E135) protein is Large ribosomal subunit protein bL20.